Consider the following 274-residue polypeptide: MPELPEVETTKQGIKPHLEGRIITTAQVRNRKLRLPVPLNLNELCEGKHITAITRRGKYILLHMDKGYILIHLGMSGHLRIVSQTANPQKHDHVDLHINNGLALRFCDPRRFGLFIYIDENPYQHPLLAHLGPEPLSDDFNSEYLLRKAANKSQSIKSFIMDSQIVVGIGNIYAAESLFLAKIHPNTSAKKITTEEFNSLTGHIKKILESAIEAGGTTLRDFYSSDGKPGYFRFALKVYGRKNLPCLVCENKIETVVIAGRHSAFCPHCQPIIT.

Residue proline 2 is the Schiff-base intermediate with DNA of the active site. Catalysis depends on glutamate 3, which acts as the Proton donor. Lysine 58 acts as the Proton donor; for beta-elimination activity in catalysis. The DNA site is built by histidine 91, arginine 110, and lysine 152. An FPG-type zinc finger spans residues 237-271 (KVYGRKNLPCLVCENKIETVVIAGRHSAFCPHCQP). Arginine 261 serves as the catalytic Proton donor; for delta-elimination activity.

It belongs to the FPG family. Monomer. Zn(2+) serves as cofactor.

It catalyses the reaction Hydrolysis of DNA containing ring-opened 7-methylguanine residues, releasing 2,6-diamino-4-hydroxy-5-(N-methyl)formamidopyrimidine.. The enzyme catalyses 2'-deoxyribonucleotide-(2'-deoxyribose 5'-phosphate)-2'-deoxyribonucleotide-DNA = a 3'-end 2'-deoxyribonucleotide-(2,3-dehydro-2,3-deoxyribose 5'-phosphate)-DNA + a 5'-end 5'-phospho-2'-deoxyribonucleoside-DNA + H(+). Its function is as follows. Involved in base excision repair of DNA damaged by oxidation or by mutagenic agents. Acts as a DNA glycosylase that recognizes and removes damaged bases. Has a preference for oxidized purines, such as 7,8-dihydro-8-oxoguanine (8-oxoG). Has AP (apurinic/apyrimidinic) lyase activity and introduces nicks in the DNA strand. Cleaves the DNA backbone by beta-delta elimination to generate a single-strand break at the site of the removed base with both 3'- and 5'-phosphates. The chain is Formamidopyrimidine-DNA glycosylase from Legionella pneumophila (strain Paris).